A 44-amino-acid chain; its full sequence is Thymosin beta-4 (44 aa).

Residues 1-25 (MSDKPDMAEIEKFDKSKLKKTETQE) show a composition bias toward basic and acidic residues. The disordered stretch occupies residues 1 to 44 (MSDKPDMAEIEKFDKSKLKKTETQEKNPLPSKETIEQEKQAGES). N-acetylserine is present on S2. At S2 the chain carries Phosphoserine. Residue K4 is modified to N6-acetyllysine. At K12 the chain carries N6-acetyllysine; alternate. K12 participates in a covalent cross-link: Glycyl lysine isopeptide (Lys-Gly) (interchain with G-Cter in SUMO2); alternate. T23 carries the phosphothreonine modification. The residue at position 26 (K26) is an N6-acetyllysine. S31 is modified (phosphoserine). K32 is subject to N6-acetyllysine. Basic and acidic residues predominate over residues 33-44 (ETIEQEKQAGES). Residue T34 is modified to Phosphothreonine. At K39 the chain carries N6-acetyllysine.

It belongs to the thymosin beta family. In terms of assembly, identified in a complex composed of ACTA1, COBL, GSN AND TMSB4X. Interacts with SERPINB1. Post-translationally, acSDKP is inactivated by ACE, which removes the dipeptide Lys-Pro from its C-terminus.

It is found in the cytoplasm. The protein localises to the cytoskeleton. Plays an important role in the organization of the cytoskeleton. Binds to and sequesters actin monomers (G actin) and therefore inhibits actin polymerization. In terms of biological role, potent inhibitor of bone marrow derived stem cell differentiation. Acts by inhibits the entry of hematopoietic pluripotent stem cells into the S-phase. The protein is Thymosin beta-4 (TMSB4) of Bos taurus (Bovine).